The primary structure comprises 68 residues: Antimicrobial peptide Eval655 (68 aa).

The first 23 residues, 1 to 23 (MKTQFVVLLVALVLLQMFAQSEA), serve as a signal peptide directing secretion. At leucine 36 the chain carries Leucine amide. The propeptide occupies 37–68 (GKRGLKNLDDFDDIFDDDLSSADLEFLKQLMR).

It belongs to the non-disulfide-bridged peptide (NDBP) superfamily. Short antimicrobial peptide (group 4) family. Expressed by the venom gland.

The protein resides in the secreted. Functionally, probable antimicrobial peptide. Shows low inhibitory activity against herpes simplex virus type 1 (HSV-1). The protein is Antimicrobial peptide Eval655 of Euscorpiops validus (Scorpion).